The primary structure comprises 208 residues: Large ribosomal subunit protein bL25 (208 aa).

Belongs to the bacterial ribosomal protein bL25 family. CTC subfamily. Part of the 50S ribosomal subunit; part of the 5S rRNA/L5/L18/L25 subcomplex. Contacts the 5S rRNA. Binds to the 5S rRNA independently of L5 and L18.

In terms of biological role, this is one of the proteins that binds to the 5S RNA in the ribosome where it forms part of the central protuberance. The chain is Large ribosomal subunit protein bL25 from Burkholderia pseudomallei (strain K96243).